A 452-amino-acid polypeptide reads, in one-letter code: Type II methyltransferase M.EcaI (452 aa).

Belongs to the N(4)/N(6)-methyltransferase family.

It carries out the reaction a 2'-deoxyadenosine in DNA + S-adenosyl-L-methionine = an N(6)-methyl-2'-deoxyadenosine in DNA + S-adenosyl-L-homocysteine + H(+). A beta subtype methylase, recognizes the double-stranded sequence 5'-GGTNACC-3', methylates A-5 on both strands and protects the DNA from cleavage by the EcaI endonuclease. The polypeptide is Type II methyltransferase M.EcaI (ecaIM) (Enterobacter cloacae).